A 533-amino-acid chain; its full sequence is Na(+)/H(+) antiporter NhaB (533 aa).

Helical transmembrane passes span 10–30, 67–87, 98–118, 131–165, 209–229, 247–267, 310–330, 355–375, 396–416, 454–474, and 481–501; these read IGNF…SFLI, PGGL…SQVL, LLLV…LFVF, VSLL…FYSI, LLMH…VGEP, IRMS…CFIV, AFVG…VGLI, EEAL…AVII, LVIF…VFVG, ATPN…APLI, and MVWM…MAIQ.

The protein belongs to the NhaB Na(+)/H(+) (TC 2.A.34) antiporter family.

The protein localises to the cell inner membrane. It catalyses the reaction 2 Na(+)(in) + 3 H(+)(out) = 2 Na(+)(out) + 3 H(+)(in). Its function is as follows. Na(+)/H(+) antiporter that extrudes sodium in exchange for external protons. This is Na(+)/H(+) antiporter NhaB from Shewanella sp. (strain ANA-3).